The following is a 151-amino-acid chain: MDNKDNRKFYLIREDVLPESVIKTLKVKDALKNNSNLSIYDAVKQFNLSRSAFYKYRETIFPVDEKILDQREFTLILYVNDIVGMLAQVLNAISQLQLSVLTIHQSVPIEDKATITLSLNARNSNLSIDEVIESLREINHVTKVDLISMTM.

In terms of domain architecture, ACT spans 74-149 (TLILYVNDIV…HVTKVDLISM (76 aa)).

The protein belongs to the UPF0735 family.

The polypeptide is UPF0735 ACT domain-containing protein SERP1207 (Staphylococcus epidermidis (strain ATCC 35984 / DSM 28319 / BCRC 17069 / CCUG 31568 / BM 3577 / RP62A)).